Here is a 1255-residue protein sequence, read N- to C-terminus: TBC1 domain family member 1 (1255 aa).

A Phosphoserine modification is found at Ser-146. The interval 208–228 (RTDWEAPTGQPSAPGPRPMRK) is disordered. Residue Ser-229 is modified to Phosphoserine; by PKB/AKT1. The residue at position 231 (Ser-231) is a Phosphoserine; by AMPK. Positions 238–398 (LAFRKEFQDA…LHKLCERIEG (161 aa)) constitute a PID domain. Ser-489 is subject to Phosphoserine; by PKB/AKT1. Ser-497 carries the post-translational modification Phosphoserine. Thr-499 carries the post-translational modification Phosphothreonine; by PKB/AKT1. Phosphoserine occurs at positions 501, 519, 521, 559, 560, 564, 565, and 579. Disordered stretches follow at residues 509–544 (GNKARGLQDHSASVDLDSSTSSTLSNTSKELSMGDK) and 559–581 (SSDDLSSDSEGHIAEESALLSPQ). A compositionally biased stretch (low complexity) spans 519–539 (SASVDLDSSTSSTLSNTSKEL). Phosphothreonine is present on Thr-590. 2 disordered regions span residues 595–614 (PVECPAPPEPAQSSPGVSQR) and 621–681 (SVST…GNAV). The residue at position 608 (Ser-608) is a Phosphoserine. Ser-621 is modified (phosphoserine; by PKB/AKT1). Phosphoserine is present on residues Ser-660 and Ser-661. A compositionally biased stretch (polar residues) spans 670 to 679 (HNSSGEQSGN). Ser-697 is subject to Phosphoserine; by PKB/AKT1. A phosphoserine mark is found at Ser-698 and Ser-699. A Phosphoserine; by AMPK modification is found at Ser-700. Positions 764-786 (DSPSRYEDYSELGELPPRSPLEP) are disordered. 2 positions are modified to phosphoserine: Ser-782 and Ser-1028. Residues 887–1081 (GVPRHHRGEI…RVFDMIFLQG (195 aa)) enclose the Rab-GAP TBC domain. A Phosphotyrosine modification is found at Tyr-1039. The residue at position 1218 (Thr-1218) is a Phosphothreonine. Residues 1233 to 1255 (LRRQSARPSTPEPDCTQLEPTGD) are disordered.

Interacts with APPL2 (via BAR domain); interaction is dependent of TBC1D1 phosphorylation at Ser-229; interaction diminishes the phosphorylation of TBC1D1 at Thr-590, resulting in inhibition of SLC2A4/GLUT4 translocation and glucose uptake. Insulin-stimulated phosphorylation by AKT family kinases stimulates SLC2A4/GLUT4 translocation. As to expression, expressed in highest levels in hematopoietic cells, testis and kidney.

It is found in the nucleus. May act as a GTPase-activating protein for Rab family protein(s). May play a role in the cell cycle and differentiation of various tissues. Involved in the trafficking and translocation of GLUT4-containing vesicles and insulin-stimulated glucose uptake into cells. The protein is TBC1 domain family member 1 (Tbc1d1) of Mus musculus (Mouse).